Consider the following 99-residue polypeptide: Accessory protein p12I (99 aa).

An SH3-binding motif is present at residues 4 to 11; that stretch reads RLLSPLSP. A helical membrane pass occupies residues 12-32; that stretch reads LALTALLLFLLSPGEVSGLLL. Positions 33-38 match the SH3-binding motif; it reads RPLPAP. A helical membrane pass occupies residues 48 to 68; it reads ILSNLLFLLFLPLFFSLPLLL. 2 short sequence motifs (SH3-binding) span residues 70-77 and 88-93; these read PSLPITMR and RAPSQP.

It belongs to the HTLV-1 accessory protein p12I family. P12I is a homodimer. Interacts with human CANX, CALR, ATP6V0C, IL2RB, IL2RG. Binds to MHC-I heavy chains HLA-A2, HLA-B7 and HLA-Cw4. In terms of processing, ubiquitinated; a fraction of P12I is degraded via the ubiquitin system.

Its subcellular location is the host endoplasmic reticulum membrane. The protein localises to the host Golgi apparatus. It localises to the host cis-Golgi network membrane. Its function is as follows. p12I is a modulator of T-lymphocyte proliferation and immune function and may contribute to establish a persistent infection. Binds and down-modulates cell surface expression of interleukin-2 receptors IL2RB and IL2RG. Also down-modulates cell surface MHC-I molecules by binding to free immature MHC-I heavy chains in the ER and targeting them to the proteasome for degradation. Binding to IL2RB mediates recruitment of JAK1 and JAK3. As a result of this interaction, p12I increases DNA-binding and transcriptional activity of STAT5. In Homo sapiens (Human), this protein is Accessory protein p12I.